The following is a 1355-amino-acid chain: Transcription factor MAR1 (1355 aa).

The segment at residues 23-52 (CTICRKRKVKCDKTRPHCNQCTKTGVAHLC) is a DNA-binding region (zn(2)-C6 fungal-type). Disordered regions lie at residues 586–614 (TTDN…KDTN), 918–942 (SVPS…LNQD), and 1221–1253 (PPIS…TSSL). Over residues 589-603 (NTRSGPPSNSNRNGS) the composition is skewed to low complexity. The span at 604–614 (ETPSVSPKDTN) shows a compositional bias: polar residues. The span at 918–927 (SVPSSCNSSS) shows a compositional bias: low complexity. Positions 1225–1238 (SAKNNMAWGTTPES) are enriched in polar residues.

Its subcellular location is the nucleus. Its function is as follows. Transcription factor that contributes to plasma membrane sphingolipid incorporation and membrane permeability, decreasing fluconazole accumulation. Regulates 337 genes under fluconazole stress, including several related to lipid biosynthesis pathways such as RSB1, encoding a sphingoid long-chain base efflux transporter. Associates with the promoter of RSB1 in the region containing two 5'-CCCCTCC-3' motifs and increases its promoter occupancy upon fluconazole stress. This Candida glabrata (strain ATCC 2001 / BCRC 20586 / JCM 3761 / NBRC 0622 / NRRL Y-65 / CBS 138) (Yeast) protein is Transcription factor MAR1.